We begin with the raw amino-acid sequence, 1189 residues long: MSAGGSARKSTGRSSYYYRLLRRPRLQRQRSRSRSRTRPARESPQERPGSRRSLPGSLSEKSPSMEPSAATPFRVTGFLSRRLKGSIKRTKSQPKLDRNHSFRHILPGFRSAAAAAADNERSHLMPRLKESRSHESLLSPSSAVEALDLSMEEEVVIKPVHSSILGQDYCFEVTTSSGSKCFSCRSAAERDKWMENLRRAVHPNKDNSRRVEHILKLWVIEAKDLPAKKKYLCELCLDDVLYARTTGKLKTDNVFWGEHFEFHNLPPLRTVTVHLYRETDKKKKKERNSYLGLVSLPAASVAGRQFVEKWYPVVTPNPKGGKGPGPMIRIKARYQTITILPMEMYKEFAEHITNHYLGLCAALEPILSAKTKEEMASALVHILQSTGKVKDFLTDLMMSEVDRCGDNEHLIFRENTLATKAIEEYLKLVGQKYLQDALGEFIKALYESDENCEVDPSKCSAADLPEHQGNLKMCCELAFCKIINSYCVFPRELKEVFASWRQECSSRGRPDISERLISASLFLRFLCPAIMSPSLFNLLQEYPDDRTARTLTLIAKVTQNLANFAKFGSKEEYMSFMNQFLEHEWTNMQRFLLEISNPETLSNTAGFEGYIDLGRELSSLHSLLWEAVSQLEQSIVSKLGPLPRILRDVHTALSTPGSGQLPGTNDLASTPGSGSSSISAGLQKMVIENDLSGLIDFTRLPSPTPENKDLFFVTRSSGVQPSPARSSSYSEANEPDLQMANGGKSLSMVDLQDARTLDGEAGSPAGPDVLPTDGQAAAAQLVAGWPARATPVNLAGLATVRRAGQTPTTPGTSEGAPGRPQLLAPLSFQNPVYQMAAGLPLSPRGLGDSGSEGHSSLSSHSNSEELAAAAKLGSFSTAAEELARRPGELARRQMSLTEKGGQPTVPRQNSAGPQRRIDQPPPPPPPPPPAPRGRTPPNLLSTLQYPRPSSGTLASASPDWVGPSTRLRQQSSSSKGDSPELKPRAVHKQGPSPVSPNALDRTAAWLLTMNAQLLEDEGLGPDPPHRDRLRSKDELSQAEKDLAVLQDKLRISTKKLEEYETLFKCQEETTQKLVLEYQARLEEGEERLRRQQEDKDIQMKGIISRLMSVEEELKKDHAEMQAAVDSKQKIIDAQEKRIASLDAANARLMSALTQLKERYSMQARNGISPTNPTKLQITENGEFRNSSNC.

A disordered region spans residues 1-75 (MSAGGSARKS…EPSAATPFRV (75 aa)). Residues 20–38 (LLRRPRLQRQRSRSRSRTR) show a composition bias toward basic residues. Basic and acidic residues predominate over residues 39 to 49 (PARESPQERPG). A PH domain is found at 101-202 (SFRHILPGFR…WMENLRRAVH (102 aa)). Residues 193–311 (WMENLRRAVH…AGRQFVEKWY (119 aa)) enclose the C2 domain. Positions 387–595 (GKVKDFLTDL…TNMQRFLLEI (209 aa)) constitute a Ras-GAP domain. The tract at residues 646-943 (LRDVHTALST…RTPPNLLSTL (298 aa)) is necessary for interaction with AKT1. Residues 653–668 (LSTPGSGQLPGTNDLA) show a composition bias toward polar residues. Disordered regions lie at residues 653 to 678 (LSTP…SSSI) and 715 to 742 (RSSG…MANG). The segment covering 669-678 (STPGSGSSSI) has biased composition (low complexity). Residues 715–731 (RSSGVQPSPARSSSYSE) show a composition bias toward polar residues. A Phosphoserine; by MAP3K5 and RIPK1 modification is found at Ser728. Ser747 is subject to Phosphoserine. 5 disordered regions span residues 803 to 823 (AGQT…PQLL), 843 to 865 (PRGL…NSEE), 895 to 998 (SLTE…SPNA), 1015 to 1035 (EDEG…KDEL), and 1164 to 1189 (RNGI…SSNC). Over residues 852–865 (EGHSSLSSHSNSEE) the composition is skewed to low complexity. Residues 919–931 (QPPPPPPPPPPAP) show a composition bias toward pro residues. Composition is skewed to polar residues over residues 938 to 955 (NLLS…TLAS) and 966 to 976 (RLRQQSSSSKG). A phosphoserine mark is found at Ser978 and Ser995. Over residues 1023 to 1035 (PPHRDRLRSKDEL) the composition is skewed to basic and acidic residues. Residues 1026–1159 (RDRLRSKDEL…SALTQLKERY (134 aa)) adopt a coiled-coil conformation.

In terms of assembly, on plasma membrane, exists in an inactive form complexed with TNFR1; in response to TNF-alpha, dissociates from TNFR1 complex, translocates to cytoplasm and forms part of an intracellular signaling complex comprising TRADD, RIPK1, TRAF2 and MAP3K5. Interacts with DAB1. Interacts (via NPXY motif) with DAB2 (via PID domain). Interacts (via PH domain) with ERN1. Part of a cytoplasmic complex made of HIPK1, DAB2IP and MAP3K5 in response to TNF-alpha; this complex formation promotes MAP3K5-JNK activation and subsequent apoptosis. Interacts (via N-terminal domain) with JAK2; the interaction occurs in a IFNG/IFN-gamma-dependent manner and inhibits JAK2 autophosphorylation activity. Interacts (via C2 domain) with GSK3B; the interaction stimulates GSK3B kinase activation. Interacts (via C2 domain) with PPP2CA. Interacts (via proline-rich motif) with a regulatory p85 subunit (via SH3 domain) of the PI3K complex; the interaction inhibits the PI3K-AKT complex activity in a TNF-alpha-dependent manner in prostate cancer (PCa) cells. Interacts with AKT1; the interaction is increased in a TNF-alpha-induced manner. Interacts (via C2 domain and active form preferentially) with KDR/VEGFR2 (tyrosine-phosphorylated active form preferentially); the interaction occurs at the late phase of VEGFA response and inhibits KDR/VEGFR2 activity. Interacts (via N-terminus C2 domain) with MAP3K5 ('Ser-966' dephosphorylated form preferentially); the interaction occurs in a TNF-alpha-induced manner. Interacts (via Ras-GAP domain) with the catalytic subunit of protein phosphatase PP2A; the interaction occurs in resting endothelial cells, is further enhanced by TNF-alpha stimulation and is required to bridge PP2A to MAP3K5. Interacts (via C-terminus PER domain) with TRAF2 (via zinc fingers); the interaction occurs in a TNF-alpha-dependent manner. Interacts with 14-3-3 proteins; the interaction occurs in a TNF-alpha-dependent manner. Interacts (via Ras-GAP domain) with RIPK1 (via kinase domain); the interaction occurs in a TNF-alpha-dependent manner. Interacts with RAB40C; acts as a GAP for RAB40C. In response to TNF-alpha-induction, phosphorylated at Ser-728; phosphorylation leads to a conformational change, and thus, increases its association with 14-3-3 proteins, MAP3K5, RIPK1 and TRAF2 in endothelial cells; also stimulates regulatory p85 subunit sequestring and PI3K-p85 complex activity inhibition. As to expression, expressed in endothelial and vascular smooth muscle cells (VSMCs). Expressed in prostate epithelial but poorly in prostate cancer cells. Poorly expressed in medulloblastoma cells compared to cerebellar precursor proliferating progenitor cells (at protein level). Low expression in prostate. Down-regulated in prostate cancer.

Its subcellular location is the cytoplasm. It localises to the cell membrane. The protein resides in the membrane. It is found in the cell projection. The protein localises to the dendrite. Functions as a scaffold protein implicated in the regulation of a large spectrum of both general and specialized signaling pathways. Involved in several processes such as innate immune response, inflammation and cell growth inhibition, apoptosis, cell survival, angiogenesis, cell migration and maturation. Also plays a role in cell cycle checkpoint control; reduces G1 phase cyclin levels resulting in G0/G1 cell cycle arrest. Mediates signal transduction by receptor-mediated inflammatory signals, such as the tumor necrosis factor (TNF), interferon (IFN) or lipopolysaccharide (LPS). Modulates the balance between phosphatidylinositol 3-kinase (PI3K)-AKT-mediated cell survival and apoptosis stimulated kinase (MAP3K5)-JNK signaling pathways; sequesters both AKT1 and MAP3K5 and counterbalances the activity of each kinase by modulating their phosphorylation status in response to pro-inflammatory stimuli. Acts as a regulator of the endoplasmic reticulum (ER) unfolded protein response (UPR) pathway; specifically involved in transduction of the ER stress-response to the JNK cascade through ERN1. Mediates TNF-alpha-induced apoptosis activation by facilitating dissociation of inhibitor 14-3-3 from MAP3K5; recruits the PP2A phosphatase complex which dephosphorylates MAP3K5 on 'Ser-966', leading to the dissociation of 13-3-3 proteins and activation of the MAP3K5-JNK signaling pathway in endothelial cells. Also mediates TNF/TRAF2-induced MAP3K5-JNK activation, while it inhibits CHUK-NF-kappa-B signaling. Acts a negative regulator in the IFN-gamma-mediated JAK-STAT signaling cascade by inhibiting smooth muscle cell (VSMCs) proliferation and intimal expansion, and thus, prevents graft arteriosclerosis (GA). Acts as a GTPase-activating protein (GAP) for the ADP ribosylation factor 6 (ARF6), Ras and RAB40C. Promotes hydrolysis of the ARF6-bound GTP and thus, negatively regulates phosphatidylinositol 4,5-bisphosphate (PIP2)-dependent TLR4-TIRAP-MyD88 and NF-kappa-B signaling pathways in endothelial cells in response to lipopolysaccharides (LPS). Binds specifically to phosphatidylinositol 4-phosphate (PtdIns4P) and phosphatidylinositol 3-phosphate (PtdIns3P). In response to vascular endothelial growth factor (VEGFA), acts as a negative regulator of the VEGFR2-PI3K-mediated angiogenic signaling pathway by inhibiting endothelial cell migration and tube formation. In the developing brain, promotes both the transition from the multipolar to the bipolar stage and the radial migration of cortical neurons from the ventricular zone toward the superficial layer of the neocortex in a glial-dependent locomotion process. Probable downstream effector of the Reelin signaling pathway; promotes Purkinje cell (PC) dendrites development and formation of cerebellar synapses. Also functions as a tumor suppressor protein in prostate cancer progression; prevents cell proliferation and epithelial-to-mesenchymal transition (EMT) through activation of the glycogen synthase kinase-3 beta (GSK3B)-induced beta-catenin and inhibition of PI3K-AKT and Ras-MAPK survival downstream signaling cascades, respectively. In Homo sapiens (Human), this protein is Disabled homolog 2-interacting protein.